We begin with the raw amino-acid sequence, 130 residues long: Sulfurtransferase TusD (130 aa).

Catalysis depends on cysteine 78, which acts as the Cysteine persulfide intermediate.

The protein belongs to the DsrE/TusD family. In terms of assembly, heterohexamer, formed by a dimer of trimers. The hexameric TusBCD complex contains 2 copies each of TusB, TusC and TusD. The TusBCD complex interacts with TusE.

It is found in the cytoplasm. Part of a sulfur-relay system required for 2-thiolation of 5-methylaminomethyl-2-thiouridine (mnm(5)s(2)U) at tRNA wobble positions. Accepts sulfur from TusA and transfers it in turn to TusE. The chain is Sulfurtransferase TusD from Buchnera aphidicola subsp. Baizongia pistaciae (strain Bp).